A 481-amino-acid polypeptide reads, in one-letter code: MELTLNEKRLLVALGPMGSADAAVLAEKMDTRREAVVQYANLAGDRGLVDVEKHVARRYVPTEEGRAYMGKGLPERQVLESFEESIPMRDLQGHPLAKIAIGWMRKKGWIAITGGVVQKTGKTAPGPDEAAFVRLAEKGEIADGEGVADLAKRGLAIEEETVAYTVSITPRGRELLSQGLDLREEAGTLTREQILSGEWKSLPLRRYDVTKLPKRAYPGKVHPYQRIIDEMRRILFDMGFEEMSGGIVQSSFWNFDALFQPQDHPAREMQDTFFLGERRPLPAGYERVRDMHEHGGETSSTGWGGTWSAEKAEQCVLRTHTTSLSIQHLAAHPKPPVKAFCIGRVYRREAIDPTHLAEFEQLEGIVMDEDVNLRHLLGFLKEFYAKMGFEKVRFRPGYFPYTEPSVEPEVYVDGLGWVELGGSGIFRQEVTAPFGIEHPVLAWGLGISRVAMLRLGLRDLRHLYRSDIEWIRETPVYGGRR.

L-phenylalanine-binding positions include T322, 361–363 (QLE), and Y401. E403 is a Mg(2+) binding site. Position 426 (F426) interacts with L-phenylalanine.

It belongs to the class-II aminoacyl-tRNA synthetase family. Phe-tRNA synthetase alpha subunit type 2 subfamily. In terms of assembly, tetramer of two alpha and two beta subunits. Mg(2+) is required as a cofactor.

It is found in the cytoplasm. It catalyses the reaction tRNA(Phe) + L-phenylalanine + ATP = L-phenylalanyl-tRNA(Phe) + AMP + diphosphate + H(+). This Methanoculleus marisnigri (strain ATCC 35101 / DSM 1498 / JR1) protein is Phenylalanine--tRNA ligase alpha subunit.